The primary structure comprises 511 residues: DNA nucleotidylexotransferase (511 aa).

Positions 1–26 (MDPLQTAHAGPRKKRPRQTGASMAST) are disordered. Residues 11-17 (PRKKRPR) carry the Nuclear localization signal motif. The BRCT domain maps to 27–124 (PQDVRFQDLV…KPVETTGKHQ (98 aa)). Position 134 is a phosphoserine (Ser-134). Residues 151-511 (SQYACQRRTT…DYIEPSERNA (361 aa)) form a mediates interaction with DNTTIP2 region. The tract at residues 258 to 262 (VGLKT) is involved in DNA binding. A 2'-deoxyribonucleoside 5'-triphosphate contacts are provided by residues 333-338 (GFRRGK) and 342-345 (HDVD). The Mg(2+) site is built by Asp-343, Asp-345, and Asp-435. 450–451 (GW) serves as a coordination point for a 2'-deoxyribonucleoside 5'-triphosphate.

This sequence belongs to the DNA polymerase type-X family. In terms of assembly, interacts with PRP19 and DNTTIP1. Forms a ternary complex with DNTTIP2 and core histone. Released from this complex by PCNA. Interacts with TRERF1. Mg(2+) is required as a cofactor.

Its subcellular location is the nucleus. The enzyme catalyses DNA(n) + a 2'-deoxyribonucleoside 5'-triphosphate = DNA(n+1) + diphosphate. In terms of biological role, template-independent DNA polymerase which catalyzes the random addition of deoxynucleoside 5'-triphosphate to the 3'-end of a DNA initiator. One of the in vivo functions of this enzyme is the addition of nucleotides at the junction (N region) of rearranged Ig heavy chain and T-cell receptor gene segments during the maturation of B- and T-cells. The polypeptide is DNA nucleotidylexotransferase (DNTT) (Eulemur macaco (Black lemur)).